The chain runs to 202 residues: Small ribosomal subunit protein uS4c (202 aa).

The region spanning 90–152 (MRLDNLIFRL…AASKSLVNTY (63 aa)) is the S4 RNA-binding domain.

It belongs to the universal ribosomal protein uS4 family. As to quaternary structure, part of the 30S ribosomal subunit. Contacts protein S5. The interaction surface between S4 and S5 is involved in control of translational fidelity.

Its subcellular location is the plastid. The protein localises to the chloroplast. Functionally, one of the primary rRNA binding proteins, it binds directly to 16S rRNA where it nucleates assembly of the body of the 30S subunit. Its function is as follows. With S5 and S12 plays an important role in translational accuracy. The chain is Small ribosomal subunit protein uS4c (rps4) from Emiliania huxleyi (Coccolithophore).